Here is a 78-residue protein sequence, read N- to C-terminus: Surfactant-associated protein 2 (78 aa).

The N-terminal stretch at 1-19 is a signal peptide; it reads MGAGLPLVLLLTLVGSSQG. N-linked (GlcNAc...) asparagine glycosylation occurs at Asn-37.

Post-translationally, N-glycosylated.

Its subcellular location is the secreted. It is found in the cytoplasmic vesicle. It localises to the secretory vesicle. The protein localises to the golgi apparatus. Functionally, putative surfactant protein. This Bos taurus (Bovine) protein is Surfactant-associated protein 2 (SFTA2).